The following is a 224-amino-acid chain: Ribonuclease 3 (224 aa).

In terms of domain architecture, RNase III spans 4 to 127 (IEKLEQSLTY…IIGAIHLEAG (124 aa)). Glu-40 contacts Mg(2+). Asp-44 is a catalytic residue. Positions 113 and 116 each coordinate Mg(2+). The active site involves Glu-116. In terms of domain architecture, DRBM spans 154 to 223 (DYKTKLQEIT…AKIALEKLGA (70 aa)).

This sequence belongs to the ribonuclease III family. In terms of assembly, homodimer. The cofactor is Mg(2+).

It localises to the cytoplasm. The catalysed reaction is Endonucleolytic cleavage to 5'-phosphomonoester.. Its function is as follows. Digests double-stranded RNA. Involved in the processing of primary rRNA transcript to yield the immediate precursors to the large and small rRNAs (23S and 16S). Processes some mRNAs, and tRNAs when they are encoded in the rRNA operon. Processes pre-crRNA and tracrRNA of type II CRISPR loci if present in the organism. The sequence is that of Ribonuclease 3 from Campylobacter jejuni subsp. jejuni serotype O:6 (strain 81116 / NCTC 11828).